The primary structure comprises 547 residues: Chaperonin GroEL 1 (547 aa).

ATP contacts are provided by residues 30 to 33 (TLGP), K51, 87 to 91 (DGTTT), G415, and D495.

The protein belongs to the chaperonin (HSP60) family. Forms a cylinder of 14 subunits composed of two heptameric rings stacked back-to-back. Interacts with the co-chaperonin GroES.

It is found in the cytoplasm. The enzyme catalyses ATP + H2O + a folded polypeptide = ADP + phosphate + an unfolded polypeptide.. Its function is as follows. Together with its co-chaperonin GroES, plays an essential role in assisting protein folding. The GroEL-GroES system forms a nano-cage that allows encapsulation of the non-native substrate proteins and provides a physical environment optimized to promote and accelerate protein folding. This is Chaperonin GroEL 1 from Rhizobium johnstonii (strain DSM 114642 / LMG 32736 / 3841) (Rhizobium leguminosarum bv. viciae).